The sequence spans 453 residues: Chromosomal replication initiator protein DnaA (453 aa).

The domain I, interacts with DnaA modulators stretch occupies residues 1–74 (MKEKQFWNRI…GFEIYDAEIT (74 aa)). Positions 74–113 (TPHYIFTKPQDTTSSQVEEATNLTLYNYSPKLVSIPYSDT) are domain II. The segment at 114–331 (GLKEKYTFDN…GAINDITLIA (218 aa)) is domain III, AAA+ region. Gly-158, Gly-160, Lys-161, and Thr-162 together coordinate ATP. The segment at 332-453 (RVKKIKDITI…EIESIKKKIK (122 aa)) is domain IV, binds dsDNA.

Belongs to the DnaA family. Oligomerizes as a right-handed, spiral filament on DNA at oriC.

The protein resides in the cytoplasm. Plays an essential role in the initiation and regulation of chromosomal replication. ATP-DnaA binds to the origin of replication (oriC) to initiate formation of the DNA replication initiation complex once per cell cycle. Binds the DnaA box (a 9 base pair repeat at the origin) and separates the double-stranded (ds)DNA. Forms a right-handed helical filament on oriC DNA; dsDNA binds to the exterior of the filament while single-stranded (ss)DNA is stabiized in the filament's interior. The ATP-DnaA-oriC complex binds and stabilizes one strand of the AT-rich DNA unwinding element (DUE), permitting loading of DNA polymerase. After initiation quickly degrades to an ADP-DnaA complex that is not apt for DNA replication. Binds acidic phospholipids. In Streptococcus pneumoniae serotype 19F (strain G54), this protein is Chromosomal replication initiator protein DnaA.